Consider the following 587-residue polypeptide: Phosphomethylpyrimidine synthase (587 aa).

Substrate contacts are provided by residues Asn218, Met247, Tyr276, His312, 332 to 334, 373 to 376, and Glu412; these read SRG and DGLR. His416 provides a ligand contact to Zn(2+). Tyr439 serves as a coordination point for substrate. His480 contacts Zn(2+). [4Fe-4S] cluster is bound by residues Cys560, Cys563, and Cys568.

It belongs to the ThiC family. It depends on [4Fe-4S] cluster as a cofactor.

The enzyme catalyses 5-amino-1-(5-phospho-beta-D-ribosyl)imidazole + S-adenosyl-L-methionine = 4-amino-2-methyl-5-(phosphooxymethyl)pyrimidine + CO + 5'-deoxyadenosine + formate + L-methionine + 3 H(+). The protein operates within cofactor biosynthesis; thiamine diphosphate biosynthesis. Functionally, catalyzes the synthesis of the hydroxymethylpyrimidine phosphate (HMP-P) moiety of thiamine from aminoimidazole ribotide (AIR) in a radical S-adenosyl-L-methionine (SAM)-dependent reaction. The polypeptide is Phosphomethylpyrimidine synthase (Porphyromonas gingivalis (strain ATCC 33277 / DSM 20709 / CIP 103683 / JCM 12257 / NCTC 11834 / 2561)).